The sequence spans 96 residues: Co-chaperonin GroES (96 aa).

The protein belongs to the GroES chaperonin family. Heptamer of 7 subunits arranged in a ring. Interacts with the chaperonin GroEL.

The protein localises to the cytoplasm. Functionally, together with the chaperonin GroEL, plays an essential role in assisting protein folding. The GroEL-GroES system forms a nano-cage that allows encapsulation of the non-native substrate proteins and provides a physical environment optimized to promote and accelerate protein folding. GroES binds to the apical surface of the GroEL ring, thereby capping the opening of the GroEL channel. This chain is Co-chaperonin GroES, found in Shewanella frigidimarina (strain NCIMB 400).